Reading from the N-terminus, the 242-residue chain is uncharacterized protein (242 aa).

3 residues coordinate S-adenosyl-L-methionine: glycine 198, isoleucine 218, and leucine 227.

It belongs to the class IV-like SAM-binding methyltransferase superfamily. RNA methyltransferase TrmH family.

This is an uncharacterized protein from Mycoplasma genitalium (strain ATCC 33530 / DSM 19775 / NCTC 10195 / G37) (Mycoplasmoides genitalium).